The following is a 510-amino-acid chain: GMP synthase [glutamine-hydrolyzing] (510 aa).

One can recognise a Glutamine amidotransferase type-1 domain in the interval 5–195 (KILVLDFGGQ…LFKVCGVKGT (191 aa)). Residue cysteine 82 is the Nucleophile of the active site. Active-site residues include histidine 169 and glutamate 171. The 190-residue stretch at 196-385 (WNMADFINEE…LGLPDEIVWR (190 aa)) folds into the GMPS ATP-PPase domain. Residue 223 to 229 (SGGVDSA) participates in ATP binding.

In terms of assembly, homodimer.

The enzyme catalyses XMP + L-glutamine + ATP + H2O = GMP + L-glutamate + AMP + diphosphate + 2 H(+). It functions in the pathway purine metabolism; GMP biosynthesis; GMP from XMP (L-Gln route): step 1/1. In terms of biological role, catalyzes the synthesis of GMP from XMP. The chain is GMP synthase [glutamine-hydrolyzing] from Halothermothrix orenii (strain H 168 / OCM 544 / DSM 9562).